The primary structure comprises 101 residues: Synaptobrevin-B (101 aa).

At 1 to 76 (MSNNPNNSGQ…RRQMWCRNMK (76 aa)) the chain is on the cytoplasmic side. Positions 13–73 (KTQSILQEVD…VTIRRQMWCR (61 aa)) constitute a v-SNARE coiled-coil homology domain. Residues 77 to 97 (LQLIIIAVVILVLAVILIPII) traverse the membrane as a helical; Anchor for type IV membrane protein segment. Over 98-101 (MKFV) the chain is Vesicular.

It belongs to the synaptobrevin family.

It is found in the cytoplasmic vesicle. The protein resides in the secretory vesicle membrane. Its function is as follows. Involved in the targeting and/or fusion of transport vesicles to their target membrane. The chain is Synaptobrevin-B (sybB) from Dictyostelium discoideum (Social amoeba).